Here is a 214-residue protein sequence, read N- to C-terminus: MILILLGPPGAGKGTQAKLLSTELGIPHISTGDMFRDHKARGTEIGKQVQAIMDGGGLVTDDITNAMVKERLSRPDVAPGFILDGYPRTVVQAEYLDGLLRSLGRSIGRALSYEVAEELVVERISGRRSCPRCGAVYHVSQNPPRRAGYCDRDDAELVQREDDKPENVRKRMQEYGTKTEPLKRYYRDRGELTEVEGVGTPEGILAATKKVLGR.

Residue 10-15 (GAGKGT) participates in ATP binding. The NMP stretch occupies residues 30–59 (STGDMFRDHKARGTEIGKQVQAIMDGGGLV). AMP contacts are provided by residues Thr31, Arg36, 57–59 (GLV), 85–88 (GYPR), and Gln92. An LID region spans residues 126–163 (GRRSCPRCGAVYHVSQNPPRRAGYCDRDDAELVQREDD). Arg127 lines the ATP pocket. Zn(2+) is bound by residues Cys130 and Cys133. 136-137 (VY) contacts ATP. Residues Cys150 and Asp153 each contribute to the Zn(2+) site. AMP-binding residues include Arg160 and Arg171. Gly199 serves as a coordination point for ATP.

Belongs to the adenylate kinase family. In terms of assembly, monomer.

It is found in the cytoplasm. The catalysed reaction is AMP + ATP = 2 ADP. The protein operates within purine metabolism; AMP biosynthesis via salvage pathway; AMP from ADP: step 1/1. In terms of biological role, catalyzes the reversible transfer of the terminal phosphate group between ATP and AMP. Plays an important role in cellular energy homeostasis and in adenine nucleotide metabolism. In Anaeromyxobacter dehalogenans (strain 2CP-C), this protein is Adenylate kinase.